A 470-amino-acid polypeptide reads, in one-letter code: ATP synthase subunit beta (470 aa).

Position 158 to 165 (158 to 165 (GGAGVGKT)) interacts with ATP.

It belongs to the ATPase alpha/beta chains family. As to quaternary structure, F-type ATPases have 2 components, CF(1) - the catalytic core - and CF(0) - the membrane proton channel. CF(1) has five subunits: alpha(3), beta(3), gamma(1), delta(1), epsilon(1). CF(0) has three main subunits: a(1), b(2) and c(9-12). The alpha and beta chains form an alternating ring which encloses part of the gamma chain. CF(1) is attached to CF(0) by a central stalk formed by the gamma and epsilon chains, while a peripheral stalk is formed by the delta and b chains.

It localises to the cell membrane. It carries out the reaction ATP + H2O + 4 H(+)(in) = ADP + phosphate + 5 H(+)(out). Functionally, produces ATP from ADP in the presence of a proton gradient across the membrane. The catalytic sites are hosted primarily by the beta subunits. The protein is ATP synthase subunit beta of Halalkalibacterium halodurans (strain ATCC BAA-125 / DSM 18197 / FERM 7344 / JCM 9153 / C-125) (Bacillus halodurans).